Here is a 170-residue protein sequence, read N- to C-terminus: Ribosome maturation factor RimM (170 aa).

Residues 97 to 170 (HPDEYYWVDL…RIVVDWDPEF (74 aa)) form the PRC barrel domain.

The protein belongs to the RimM family. Binds ribosomal protein uS19.

The protein resides in the cytoplasm. Its function is as follows. An accessory protein needed during the final step in the assembly of 30S ribosomal subunit, possibly for assembly of the head region. Essential for efficient processing of 16S rRNA. May be needed both before and after RbfA during the maturation of 16S rRNA. It has affinity for free ribosomal 30S subunits but not for 70S ribosomes. In Xylella fastidiosa (strain M12), this protein is Ribosome maturation factor RimM.